We begin with the raw amino-acid sequence, 149 residues long: Large ribosomal subunit protein bL9 (149 aa).

This sequence belongs to the bacterial ribosomal protein bL9 family.

Binds to the 23S rRNA. The polypeptide is Large ribosomal subunit protein bL9 (Haemophilus ducreyi (strain 35000HP / ATCC 700724)).